The sequence spans 192 residues: 7-methyl-GTP pyrophosphatase (192 aa).

D69 acts as the Proton acceptor in catalysis.

It belongs to the Maf family. YceF subfamily. It depends on a divalent metal cation as a cofactor.

It localises to the cytoplasm. It carries out the reaction N(7)-methyl-GTP + H2O = N(7)-methyl-GMP + diphosphate + H(+). In terms of biological role, nucleoside triphosphate pyrophosphatase that hydrolyzes 7-methyl-GTP (m(7)GTP). May have a dual role in cell division arrest and in preventing the incorporation of modified nucleotides into cellular nucleic acids. The chain is 7-methyl-GTP pyrophosphatase (maf-2) from Pseudomonas putida (strain ATCC 47054 / DSM 6125 / CFBP 8728 / NCIMB 11950 / KT2440).